The chain runs to 287 residues: Pyridoxal kinase PdxY (287 aa).

Residues serine 9 and 44–45 contribute to the substrate site; that span reads MQ. ATP is bound by residues aspartate 111, alanine 142, glutamate 147, and lysine 180. Substrate is bound at residue aspartate 221.

The protein belongs to the pyridoxine kinase family. PdxY subfamily. In terms of assembly, homodimer. Mg(2+) serves as cofactor.

It carries out the reaction pyridoxal + ATP = pyridoxal 5'-phosphate + ADP + H(+). It functions in the pathway cofactor metabolism; pyridoxal 5'-phosphate salvage; pyridoxal 5'-phosphate from pyridoxal: step 1/1. Its function is as follows. Pyridoxal kinase involved in the salvage pathway of pyridoxal 5'-phosphate (PLP). Catalyzes the phosphorylation of pyridoxal to PLP. This chain is Pyridoxal kinase PdxY, found in Burkholderia mallei (strain ATCC 23344).